The following is a 460-amino-acid chain: MGKEKTHVNLVVIGHVDAGKSTTTGHLIYKCGGIDKRTIEKFEKEADELGKGSFKYAWVLDKLKAERERGITIDIALWKFQTPKYYVTVIDAPGHRDFIKNMITGTSQADCAILIIAGGVGEFEAGISKDGQTREHALLAFTLGVKQLIVAINKMDSVKWSQDRYNEICKETANFVKKVGYNPKSVPFVPISGWNGDNMIEASTNCDWYKGWTKETKAGEVKGKTLLEAIDAIEPPVRPSDKPLRLPLQDVYKIGGIGTVPVGRVETGVIKAGMVVTFAPANVTTEVKSVEMHHEILPDGGFPGDNVGFNVKNVSVKDIRRGNVAGDSKNDPPKGCDSFNAQVIVLNHPGQIGAGYAPVLDCHTAHIACKFDTLIEKIDRRTGKKMEDSPKFIKSGDAAIVKMVPSKPMCVEAFTEYPPLGRFAVRDMRQTVAVGVIKSVEKSDKAGGKVTKAAQKAAKK.

Glycine 2 bears the N,N,N-trimethylglycine mark. Lysine 3 carries the N6,N6-dimethyllysine; alternate modification. Residue lysine 3 is modified to N6-methyllysine; alternate. The region spanning 5–240 (KTHVNLVVIG…DAIEPPVRPS (236 aa)) is the tr-type G domain. Positions 14–21 (GHVDAGKS) are G1. 14-21 (GHVDAGKS) lines the GTP pocket. Position 30 is an N6-methyllysine (lysine 30). The tract at residues 70-74 (GITID) is G2. An N6,N6,N6-trimethyllysine modification is found at lysine 79. The tract at residues 91 to 94 (DAPG) is G3. GTP-binding positions include 91–95 (DAPGH) and 153–156 (NKMD). The G4 stretch occupies residues 153-156 (NKMD). The interval 192–194 (SGW) is G5. At lysine 317 the chain carries N6,N6-dimethyllysine; alternate. Lysine 317 carries the post-translational modification N6-methyllysine; alternate. Lysine 391 carries the post-translational modification N6-methyllysine.

Belongs to the TRAFAC class translation factor GTPase superfamily. Classic translation factor GTPase family. EF-Tu/EF-1A subfamily.

The protein localises to the cytoplasm. This protein promotes the GTP-dependent binding of aminoacyl-tRNA to the A-site of ribosomes during protein biosynthesis. This chain is Elongation factor 1-alpha (TEF), found in Yarrowia lipolytica (strain CLIB 122 / E 150) (Yeast).